Here is a 339-residue protein sequence, read N- to C-terminus: Dihydroorotate dehydrogenase (quinone) (339 aa).

FMN-binding positions include 61-65 (AGLDK) and threonine 85. Residue lysine 65 coordinates substrate. 110 to 114 (NRMGF) serves as a coordination point for substrate. Positions 138 and 171 each coordinate FMN. Asparagine 171 lines the substrate pocket. Residue serine 174 is the Nucleophile of the active site. Asparagine 176 is a binding site for substrate. FMN contacts are provided by lysine 216 and threonine 244. 245–246 (NT) serves as a coordination point for substrate. Residues glycine 267, glycine 296, and 317–318 (YS) contribute to the FMN site.

Belongs to the dihydroorotate dehydrogenase family. Type 2 subfamily. In terms of assembly, monomer. FMN is required as a cofactor.

The protein localises to the cell membrane. The catalysed reaction is (S)-dihydroorotate + a quinone = orotate + a quinol. It functions in the pathway pyrimidine metabolism; UMP biosynthesis via de novo pathway; orotate from (S)-dihydroorotate (quinone route): step 1/1. Its function is as follows. Catalyzes the conversion of dihydroorotate to orotate with quinone as electron acceptor. This Saccharophagus degradans (strain 2-40 / ATCC 43961 / DSM 17024) protein is Dihydroorotate dehydrogenase (quinone).